Here is a 373-residue protein sequence, read N- to C-terminus: Flagellar P-ring protein (373 aa).

The signal sequence occupies residues Met-1–Ala-30.

It belongs to the FlgI family. As to quaternary structure, the basal body constitutes a major portion of the flagellar organelle and consists of four rings (L,P,S, and M) mounted on a central rod.

The protein localises to the periplasm. It localises to the bacterial flagellum basal body. In terms of biological role, assembles around the rod to form the L-ring and probably protects the motor/basal body from shearing forces during rotation. This is Flagellar P-ring protein from Aliivibrio salmonicida (strain LFI1238) (Vibrio salmonicida (strain LFI1238)).